The following is a 262-amino-acid chain: Indole-3-glycerol phosphate synthase (262 aa).

It belongs to the TrpC family.

It carries out the reaction 1-(2-carboxyphenylamino)-1-deoxy-D-ribulose 5-phosphate + H(+) = (1S,2R)-1-C-(indol-3-yl)glycerol 3-phosphate + CO2 + H2O. It participates in amino-acid biosynthesis; L-tryptophan biosynthesis; L-tryptophan from chorismate: step 4/5. This Nitratiruptor sp. (strain SB155-2) protein is Indole-3-glycerol phosphate synthase.